Reading from the N-terminus, the 995-residue chain is Integrator complex subunit 8 (995 aa).

Threonine 18 carries the post-translational modification Phosphothreonine. Positions 24-29 (WFEFLL) match the WFEF motif motif. TPR repeat units lie at residues 250–288 (CQVC…IAEI), 320–356 (SQQL…SLPV), 570–603 (VYIL…VTEF), and 833–866 (HSWL…CSDF).

The protein belongs to the Integrator subunit 8 family. In terms of assembly, component of the Integrator complex, composed of core subunits INTS1, INTS2, INTS3, INTS4, INTS5, INTS6, INTS7, INTS8, INTS9/RC74, INTS10, INTS11/CPSF3L, INTS12, INTS13, INTS14 and INTS15. The core complex associates with protein phosphatase 2A subunits PPP2CA and PPP2R1A, to form the Integrator-PP2A (INTAC) complex.

Its subcellular location is the nucleus. The protein localises to the chromosome. In terms of biological role, component of the integrator complex, a multiprotein complex that terminates RNA polymerase II (Pol II) transcription in the promoter-proximal region of genes. The integrator complex provides a quality checkpoint during transcription elongation by driving premature transcription termination of transcripts that are unfavorably configured for transcriptional elongation: the complex terminates transcription by (1) catalyzing dephosphorylation of the C-terminal domain (CTD) of Pol II subunit POLR2A/RPB1 and SUPT5H/SPT5, (2) degrading the exiting nascent RNA transcript via endonuclease activity and (3) promoting the release of Pol II from bound DNA. The integrator complex is also involved in terminating the synthesis of non-coding Pol II transcripts, such as enhancer RNAs (eRNAs), small nuclear RNAs (snRNAs), telomerase RNAs and long non-coding RNAs (lncRNAs). Within the integrator complex, INTS8 is required for the recruitment of protein phosphatase 2A (PP2A) to transcription pause-release checkpoint. This Homo sapiens (Human) protein is Integrator complex subunit 8.